We begin with the raw amino-acid sequence, 379 residues long: dTDP-3-amino-3,4,6-trideoxy-alpha-D-glucose transaminase (379 aa).

Pyridoxal 5'-phosphate contacts are provided by residues glycine 67, glutamine 167, 188 to 193 (SFYPGK), tyrosine 221, tyrosine 227, 235 to 237 (NSR), and tyrosine 318. At lysine 193 the chain carries N6-(pyridoxal phosphate)lysine.

This sequence belongs to the degT/dnrJ/eryC1 family. In terms of assembly, homodimer. Requires pyridoxal 5'-phosphate as cofactor.

The enzyme catalyses dTDP-3-amino-3,4,6-trideoxy-alpha-D-glucose + 2-oxoglutarate = dTDP-3-dehydro-4,6-dideoxy-alpha-D-glucose + L-glutamate. The protein operates within antibiotic biosynthesis. Its function is as follows. Involved in the biosynthesis of dTDP-alpha-D-desosamine, a sugar found in several bacterial macrolide antibiotics. Catalyzes the reversible transfer of the amino group from L-glutamate to the C-3 position of dTDP-3-keto-4,6-deoxyglucose to yield dTDP-3-amino-3,4,6-trideoxyglucose. In Streptomyces venezuelae, this protein is dTDP-3-amino-3,4,6-trideoxy-alpha-D-glucose transaminase.